Reading from the N-terminus, the 213-residue chain is MSIGILGTKLGMTQIFDQESGISIPVTVVQAGPCPVTQVKTQDTDGYNAIQVGFLPVKEKALSKPELGHLKKSNTDPMRHLKEYRLTDAPNLQPGDAVTADIFQAGDLVDVAGQSMGRGFAGYQKRHNFRRGNMTHGSKNHRLPGSTGAGTTPGRVYPGKRMAGQYGASQVTVRRLTVVRVDAERNLLIIKGALPGKPGTLLNITPAKTVGRG.

A disordered region spans residues Thr-135–Arg-155.

Belongs to the universal ribosomal protein uL3 family. In terms of assembly, part of the 50S ribosomal subunit. Forms a cluster with proteins L14 and L19.

One of the primary rRNA binding proteins, it binds directly near the 3'-end of the 23S rRNA, where it nucleates assembly of the 50S subunit. The chain is Large ribosomal subunit protein uL3 from Synechocystis sp. (strain ATCC 27184 / PCC 6803 / Kazusa).